The chain runs to 576 residues: Arginine--tRNA ligase (576 aa).

The short motif at 122 to 132 is the 'HIGH' region element; that stretch reads PNVAKQMHVGH.

Belongs to the class-I aminoacyl-tRNA synthetase family. As to quaternary structure, monomer.

The protein resides in the cytoplasm. It catalyses the reaction tRNA(Arg) + L-arginine + ATP = L-arginyl-tRNA(Arg) + AMP + diphosphate. This is Arginine--tRNA ligase from Yersinia pseudotuberculosis serotype O:1b (strain IP 31758).